We begin with the raw amino-acid sequence, 201 residues long: Extracellular superoxide dismutase [Cu-Zn] (201 aa).

Positions 1-42 (MINSFIVIFLSFLIFINYANLVCVEATHVYGRRSHSNGMHGN) are cleaved as a signal peptide. His-89, His-91, and His-106 together coordinate Cu cation. The cysteines at positions 100 and 192 are disulfide-linked. Zn(2+) contacts are provided by His-106, His-114, His-123, and Asp-126. Cu cation is bound at residue His-163.

It belongs to the Cu-Zn superoxide dismutase family. In terms of assembly, homodimer. It depends on Cu cation as a cofactor. Requires Zn(2+) as cofactor.

The protein resides in the secreted. It localises to the extracellular space. The catalysed reaction is 2 superoxide + 2 H(+) = H2O2 + O2. In terms of biological role, destroys radicals which are normally produced within the cells and which are toxic to biological systems. May act in the parasite defense against phagocyte-generated reactive oxygen species. This is Extracellular superoxide dismutase [Cu-Zn] (sod-4) from Onchocerca volvulus.